A 282-amino-acid polypeptide reads, in one-letter code: MSVIGSKSCIFSVARYTRENEKSSCFTSINKKSSLDLRFPRNLAGVSCKFSGENPGTNGVSLSSKNKMEDYNTAMKRLMRSPYEYHHDLGMNYTLIRDELIVGSQPQKPEDIDHLKQEQNVAYILNLQQDKDIEYWGIDLDSIVRRCKELGIRHMRRPAKDFDPLSLRSQLPKAVSSLEWAVSEGKGRVYVHCSAGLGRAPGVSIAYMYWFCDMNLNTAYDTLVSKRPCGPNKGAIRGATYDLAKNDPWKEPFESLPENAFEDIADWERKLIQERVRALRGT.

The N-terminal 61 residues, 1 to 61 (MSVIGSKSCI…GENPGTNGVS (61 aa)), are a transit peptide targeting the chloroplast. Substrate contacts are provided by residues Tyr-83, 153-156 (RHMR), Asp-161, and 177-180 (SLEW). Residues 92 to 249 (NYTLIRDELI…TYDLAKNDPW (158 aa)) form the Tyrosine-protein phosphatase domain. Cys-193 functions as the Phosphocysteine intermediate in the catalytic mechanism. A Glucan phosphatase signature motif CXAGXGR motif is present at residues 193-199 (CSAGLGR). Substrate-binding positions include 194-199 (SAGLGR), Gly-230, Lys-245, Glu-251, 259-263 (NAFED), and Glu-268.

Widely expressed.

It is found in the plastid. The protein localises to the chloroplast. In terms of biological role, starch-associated phosphoglucan phosphatase that selectively dephosphorylates the glucan C3 position. Probably participates in the regulation of starch degradation. In Arabidopsis thaliana (Mouse-ear cress), this protein is Phosphoglucan phosphatase LSF2, chloroplastic (LSF2).